Here is a 211-residue protein sequence, read N- to C-terminus: Protein-methionine-sulfoxide reductase heme-binding subunit MsrQ (211 aa).

The next 4 membrane-spanning stretches (helical) occupy residues 10–30 (WLKVCLHLAGLLPFLWLVWAI), 82–102 (LWCFAWATLHLTSYALLELGV), 116–136 (PYLTLGIISWIILLALAFTST), and 153–173 (FVYLVAILAPIHYLWSVKIIS).

It belongs to the MsrQ family. In terms of assembly, heterodimer of a catalytic subunit (MsrP) and a heme-binding subunit (MsrQ). It depends on FMN as a cofactor. Heme b is required as a cofactor.

It is found in the cell inner membrane. Part of the MsrPQ system that repairs oxidized periplasmic proteins containing methionine sulfoxide residues (Met-O), using respiratory chain electrons. Thus protects these proteins from oxidative-stress damage caused by reactive species of oxygen and chlorine generated by the host defense mechanisms. MsrPQ is essential for the maintenance of envelope integrity under bleach stress, rescuing a wide series of structurally unrelated periplasmic proteins from methionine oxidation, including the primary periplasmic chaperone SurA and the lipoprotein Pal. MsrQ provides electrons for reduction to the reductase catalytic subunit MsrP, using the quinone pool of the respiratory chain. In Escherichia coli O157:H7, this protein is Protein-methionine-sulfoxide reductase heme-binding subunit MsrQ.